A 1519-amino-acid polypeptide reads, in one-letter code: Dicer-like protein 1 (1519 aa).

The segment covering 1 to 13 (MTHQNTETASLAT) has biased composition (polar residues). The interval 1–62 (MTHQNTETAS…KDPSQRQRQQ (62 aa)) is disordered. The span at 39–48 (SDESEGSEEE) shows a compositional bias: acidic residues. The region spanning 116–297 (LFERAKVQNT…EAARNLEALL (182 aa)) is the Helicase ATP-binding domain. Residue 129 to 136 (LDTGSGKT) participates in ATP binding. Residues 242–245 (DEAH) carry the DEAH box motif. The Helicase C-terminal domain occupies 431-601 (ALSSKVRVLW…QLLPEDRILH (171 aa)). In terms of domain architecture, Dicer dsRNA-binding fold spans 634–724 (AITVLARYAS…NSVYHRRLPA (91 aa)). The PAZ domain occupies 882–1001 (DDIEYQADMP…ICIEPLKISA (120 aa)). 2 RNase III domains span residues 1026–1184 (GLEA…LTPG) and 1235–1387 (CRRV…VDSN). Glu1275, Asp1373, and Glu1376 together coordinate Mg(2+). Positions 1421 to 1489 (TFLHNKLTNE…SENALTELLH (69 aa)) constitute a DRBM domain. Zn(2+) is bound by residues Cys1433, His1460, Cys1501, and Cys1503.

Belongs to the helicase family. Dicer subfamily. Requires Mg(2+) as cofactor. The cofactor is Mn(2+).

Its function is as follows. Dicer-like endonuclease involved in cleaving double-stranded RNA in the RNA interference (RNAi) pathway. Produces 21 to 25 bp dsRNAs (siRNAs) which target the selective destruction of homologous RNAs leading to sequence-specific suppression of gene expression, called post-transcriptional gene silencing (PTGS). Part of a broad host defense response against viral infection and transposons. This is Dicer-like protein 1 (dcl1) from Aspergillus terreus (strain NIH 2624 / FGSC A1156).